A 754-amino-acid chain; its full sequence is 5-methyltetrahydropteroyltriglutamate--homocysteine methyltransferase (754 aa).

5-methyltetrahydropteroyltri-L-glutamate is bound by residues 17-20 (RELK) and K110. L-homocysteine-binding positions include 421 to 423 (IGS) and E474. L-methionine is bound by residues 421–423 (IGS) and E474. Residues 505–506 (RC) and W551 each bind 5-methyltetrahydropteroyltri-L-glutamate. D589 lines the L-homocysteine pocket. Residue D589 participates in L-methionine binding. E595 is a 5-methyltetrahydropteroyltri-L-glutamate binding site. Residues H631, C633, and E655 each coordinate Zn(2+). H684 functions as the Proton donor in the catalytic mechanism. C716 contacts Zn(2+).

The protein belongs to the vitamin-B12 independent methionine synthase family. It depends on Zn(2+) as a cofactor.

It carries out the reaction 5-methyltetrahydropteroyltri-L-glutamate + L-homocysteine = tetrahydropteroyltri-L-glutamate + L-methionine. It participates in amino-acid biosynthesis; L-methionine biosynthesis via de novo pathway; L-methionine from L-homocysteine (MetE route): step 1/1. In terms of biological role, catalyzes the transfer of a methyl group from 5-methyltetrahydrofolate to homocysteine resulting in methionine formation. The polypeptide is 5-methyltetrahydropteroyltriglutamate--homocysteine methyltransferase (Synechococcus sp. (strain JA-2-3B'a(2-13)) (Cyanobacteria bacterium Yellowstone B-Prime)).